Consider the following 573-residue polypeptide: MSSRLSYVNVDDPNFYEFIDEKYSKYKIPPKQKTFKQFCFPSKYEFQIPQQFLAEYINPKTPYKGLLIYHRIGAGKTCTAIKIAENFKNKSKIMIVVPASLKGNFRSELRSLCADDHYLTSKERSELKILHPSSDEYKSIIKVSDDRIDKYYTIYSYNKFVDLIKQNKINLTNTLLIIDEVHNMISETGTYYESLYETIHSAPDNMRLVIMTATPIFDKPNEIALTMNLLVRNKQLPVGPDFVSTFMDIRYNSKGPVYHVKNMDLFKEFVKGYVSYYRGAPPYVFPKSELFFVRTKMSDLQKTVYQKITGKEVKQTKVRDYVNENISNNFFIGTRMISNIVYPNEKVGLKGYNSLTDEDLTIAKIREYSPKFLKILRKIKRCNGTVFVYSNFKEYGGIRVFARLLEFHRFKNYEFNGSGPRRFAIWSGDQDPIYKEEVKAVFNNKDNEFGSKIKVILGSSSIKEGVSFLRVQEVHIMEPYWNFSRMEQIIGRAIRFCSHKDVELDRQLVKVYIYLAVHPDIKMSIDERMMKMALDKKMINSAFEKALKEAAIDCELFKNANVYPGEQDIQCEQ.

One can recognise a Helicase ATP-binding domain in the interval 57 to 233; the sequence is INPKTPYKGL…ALTMNLLVRN (177 aa). 70–77 provides a ligand contact to ATP; sequence HRIGAGKT. Positions 179–182 match the DEAH box motif; sequence DEVH. The region spanning 374 to 551 is the Helicase C-terminal domain; sequence KILRKIKRCN…AFEKALKEAA (178 aa).

This sequence belongs to the DEAD box helicase family. DEAH subfamily.

It is found in the virion. It carries out the reaction ATP + H2O = ADP + phosphate + H(+). This Acanthamoeba polyphaga mimivirus (APMV) protein is Putative ATP-dependent RNA helicase R563.